A 296-amino-acid chain; its full sequence is Phosphoribosylaminoimidazole-succinocarboxamide synthase (296 aa).

This sequence belongs to the SAICAR synthetase family.

It carries out the reaction 5-amino-1-(5-phospho-D-ribosyl)imidazole-4-carboxylate + L-aspartate + ATP = (2S)-2-[5-amino-1-(5-phospho-beta-D-ribosyl)imidazole-4-carboxamido]succinate + ADP + phosphate + 2 H(+). Its pathway is purine metabolism; IMP biosynthesis via de novo pathway; 5-amino-1-(5-phospho-D-ribosyl)imidazole-4-carboxamide from 5-amino-1-(5-phospho-D-ribosyl)imidazole-4-carboxylate: step 1/2. This is Phosphoribosylaminoimidazole-succinocarboxamide synthase from Citrifermentans bemidjiense (strain ATCC BAA-1014 / DSM 16622 / JCM 12645 / Bem) (Geobacter bemidjiensis).